Here is a 593-residue protein sequence, read N- to C-terminus: UvrABC system protein C (593 aa).

A GIY-YIG domain is found at 14 to 91; it reads DSPGCYLHKD…IQENMPKYNI (78 aa). The UVR domain occupies 196–231; the sequence is NKIVNGLTEKMKSAAMTMEFERAAEYRDLIEAISLL.

Belongs to the UvrC family. Interacts with UvrB in an incision complex.

The protein localises to the cytoplasm. In terms of biological role, the UvrABC repair system catalyzes the recognition and processing of DNA lesions. UvrC both incises the 5' and 3' sides of the lesion. The N-terminal half is responsible for the 3' incision and the C-terminal half is responsible for the 5' incision. In Streptococcus agalactiae serotype Ia (strain ATCC 27591 / A909 / CDC SS700), this protein is UvrABC system protein C.